A 138-amino-acid polypeptide reads, in one-letter code: Cytosolic calcium-binding protein 2 (138 aa).

Low complexity predominate over residues 31–41; it reads TEVTQQPEESV. A disordered region spans residues 31 to 122; it reads TEVTQQPEES…KKTEVVEEKQ (92 aa). 6 consecutive repeat copies span residues 62 to 68, 71 to 75, 92 to 98, 109 to 114, 118 to 122, and 131 to 135. Residues 62–135 are 6 X 5 AA approximate repeats of V-E-E-K-K; that stretch reads VEEAEKKDEE…AAAEEVAVEK (74 aa). The span at 64 to 85 shows a compositional bias: basic and acidic residues; that stretch reads EAEKKDEETEKKTEEKDEKTEV. Positions 110–122 are enriched in basic and acidic residues; sequence EEEKKTEVVEEKQ.

Predominantly expressed in roots (e.g. in endodermis in the stele) and stems, to a lower extent in shoots, flowers and siliques, and, at low levels, in leaves.

It is found in the cytoplasm. Its subcellular location is the cytosol. Binds calcium Ca(2+) and may act as a signal mediator to buffer Ca(2+). This chain is Cytosolic calcium-binding protein 2, found in Arabidopsis thaliana (Mouse-ear cress).